A 238-amino-acid polypeptide reads, in one-letter code: Zinc import ATP-binding protein ZnuC (238 aa).

An ABC transporter domain is found at 5 to 220; that stretch reads ITLKNIHVSF…LEFISIFGLK (216 aa). 37–44 serves as a coordination point for ATP; sequence GPNGAGKS.

It belongs to the ABC transporter superfamily. Zinc importer (TC 3.A.1.15.5) family. The complex is composed of two ATP-binding proteins (ZnuC), two transmembrane proteins (ZnuB) and a solute-binding protein (ZnuA).

It is found in the cell inner membrane. The enzyme catalyses Zn(2+)(out) + ATP(in) + H2O(in) = Zn(2+)(in) + ADP(in) + phosphate(in) + H(+)(in). Its function is as follows. Part of the ABC transporter complex ZnuABC involved in zinc import. Responsible for energy coupling to the transport system. This is Zinc import ATP-binding protein ZnuC from Buchnera aphidicola subsp. Schizaphis graminum (strain Sg).